The chain runs to 305 residues: Syntaxin-123 (305 aa).

Met-1 bears the N-acetylmethionine mark. The Cytoplasmic segment spans residues 1 to 278 (MNDLISSSFK…KVLQRNNRKW (278 aa)). A coiled-coil region spans residues 46 to 66 (VKEDMKAVDEIHKRLQDANEE). In terms of domain architecture, t-SNARE coiled-coil homology spans 206–268 (LSEIQERHDT…MRGTDQLHGA (63 aa)). Residues 279–299 (ACIATILAIVVVIVILFPILF) form a helical; Anchor for type IV membrane protein membrane-spanning segment. Residues 300-305 (NTLLRP) lie on the Vesicular side of the membrane.

Belongs to the syntaxin family. As to quaternary structure, part of the t-SNARE complex. As to expression, expressed in tips of root hairs.

It is found in the membrane. Its function is as follows. Vesicle trafficking protein that functions in the secretory pathway. Acts in coordination with SYP132 to mediate tip-focused membrane trafficking for root hair tip growth. Functions in root hair elongation by forming SNARE complexes with VAMP721,VAMP722 or VAMP724. This Arabidopsis thaliana (Mouse-ear cress) protein is Syntaxin-123.